The chain runs to 230 residues: 2,3-bisphosphoglycerate-dependent phosphoglycerate mutase (230 aa).

Residues 8 to 15 (RHGQSEWN), 21 to 22 (TG), R60, 87 to 90 (ERHY), K98, 114 to 115 (RR), and 183 to 184 (GN) contribute to the substrate site. The Tele-phosphohistidine intermediate role is filled by H9. The active-site Proton donor/acceptor is E87.

This sequence belongs to the phosphoglycerate mutase family. BPG-dependent PGAM subfamily.

It catalyses the reaction (2R)-2-phosphoglycerate = (2R)-3-phosphoglycerate. It participates in carbohydrate degradation; glycolysis; pyruvate from D-glyceraldehyde 3-phosphate: step 3/5. Functionally, catalyzes the interconversion of 2-phosphoglycerate and 3-phosphoglycerate. This is 2,3-bisphosphoglycerate-dependent phosphoglycerate mutase from Lactobacillus acidophilus (strain ATCC 700396 / NCK56 / N2 / NCFM).